Here is a 232-residue protein sequence, read N- to C-terminus: Pyridoxal 5'-phosphate synthase subunit PdxS (232 aa).

Lysine 23 serves as the catalytic Schiff-base intermediate with D-ribose 5-phosphate. Position 95 (glycine 95) interacts with D-ribose 5-phosphate. A D-glyceraldehyde 3-phosphate-binding site is contributed by arginine 107. D-ribose 5-phosphate-binding positions include glycine 156 and 177–178 (GS).

Belongs to the PdxS/SNZ family. In terms of assembly, in the presence of PdxT, forms a dodecamer of heterodimers.

The enzyme catalyses aldehydo-D-ribose 5-phosphate + D-glyceraldehyde 3-phosphate + L-glutamine = pyridoxal 5'-phosphate + L-glutamate + phosphate + 3 H2O + H(+). It functions in the pathway cofactor biosynthesis; pyridoxal 5'-phosphate biosynthesis. Functionally, catalyzes the formation of pyridoxal 5'-phosphate from ribose 5-phosphate (RBP), glyceraldehyde 3-phosphate (G3P) and ammonia. The ammonia is provided by the PdxT subunit. Can also use ribulose 5-phosphate and dihydroxyacetone phosphate as substrates, resulting from enzyme-catalyzed isomerization of RBP and G3P, respectively. The chain is Pyridoxal 5'-phosphate synthase subunit PdxS from Clostridium novyi.